The primary structure comprises 359 residues: Peptide chain release factor 1 (359 aa).

Gln-234 is modified (N5-methylglutamine). The segment at 283-305 (SQKDAARAADRRAQVGSGDRSER) is disordered.

This sequence belongs to the prokaryotic/mitochondrial release factor family. Post-translationally, methylated by PrmC. Methylation increases the termination efficiency of RF1.

Its subcellular location is the cytoplasm. Functionally, peptide chain release factor 1 directs the termination of translation in response to the peptide chain termination codons UAG and UAA. In Methylobacterium nodulans (strain LMG 21967 / CNCM I-2342 / ORS 2060), this protein is Peptide chain release factor 1.